The chain runs to 812 residues: Lon protease (812 aa).

A Lon N-terminal domain is found at 22 to 215 (YAVLPLRDIV…KALSFMEAEI (194 aa)). Residue 367-374 (GPPGVGKT) coordinates ATP. The region spanning 602–783 (EDQVGVVTGL…GEVLKHALVR (182 aa)) is the Lon proteolytic domain. Residues Ser-689 and Lys-732 contribute to the active site. A disordered region spans residues 787-812 (PIEWTEQENPTAVPPVEDEAGASLAH).

The protein belongs to the peptidase S16 family. As to quaternary structure, homohexamer. Organized in a ring with a central cavity.

It is found in the cytoplasm. It carries out the reaction Hydrolysis of proteins in presence of ATP.. Its function is as follows. ATP-dependent serine protease that mediates the selective degradation of mutant and abnormal proteins as well as certain short-lived regulatory proteins. Required for cellular homeostasis and for survival from DNA damage and developmental changes induced by stress. Degrades polypeptides processively to yield small peptide fragments that are 5 to 10 amino acids long. Binds to DNA in a double-stranded, site-specific manner. This is Lon protease from Brucella melitensis biotype 1 (strain ATCC 23456 / CCUG 17765 / NCTC 10094 / 16M).